Reading from the N-terminus, the 494-residue chain is Probable malate:quinone oxidoreductase (494 aa).

Belongs to the MQO family. FAD is required as a cofactor.

It catalyses the reaction (S)-malate + a quinone = a quinol + oxaloacetate. It functions in the pathway carbohydrate metabolism; tricarboxylic acid cycle; oxaloacetate from (S)-malate (quinone route): step 1/1. The polypeptide is Probable malate:quinone oxidoreductase (Micrococcus luteus (strain ATCC 4698 / DSM 20030 / JCM 1464 / CCM 169 / CCUG 5858 / IAM 1056 / NBRC 3333 / NCIMB 9278 / NCTC 2665 / VKM Ac-2230) (Micrococcus lysodeikticus)).